Consider the following 505-residue polypeptide: NADH-quinone oxidoreductase subunit N (505 aa).

A run of 14 helical transmembrane segments spans residues 20-40 (ALAPELVLLVTAVCLMLGDLF), 59-79 (ALALTLSMNFSGGATAFGGVF), 83-103 (GLAAAFKVVCLAALGLTALMS), 115-135 (GEYYSLMAFSTLGMCVMVSAG), 137-157 (AIVLYLGLELMALPIYALVAL), 172-192 (FLMGSFASALLLFGLSILYGL), 220-240 (AVVALGLVLAGLGFKVATVPF), 251-271 (APTTVTAFMSVAAKTASFAVL), 285-305 (LWSDALAGLAVLTMLLGNIAA), 314-334 (MLAYSAIAHAGYALLGLAACT), 342-362 (AAYLTIYLCMNIGAFAVIIYL), 394-414 (LAAVMLVFLFSLTGIPPTAGF), 431-451 (ITVVVAVVCSTISAWYYLGVA), and 481-501 (AVCLAGAVLWGIFPQSLLFWI).

This sequence belongs to the complex I subunit 2 family. In terms of assembly, NDH-1 is composed of 14 different subunits. Subunits NuoA, H, J, K, L, M, N constitute the membrane sector of the complex.

The protein resides in the cell inner membrane. It catalyses the reaction a quinone + NADH + 5 H(+)(in) = a quinol + NAD(+) + 4 H(+)(out). Its function is as follows. NDH-1 shuttles electrons from NADH, via FMN and iron-sulfur (Fe-S) centers, to quinones in the respiratory chain. The immediate electron acceptor for the enzyme in this species is believed to be ubiquinone. Couples the redox reaction to proton translocation (for every two electrons transferred, four hydrogen ions are translocated across the cytoplasmic membrane), and thus conserves the redox energy in a proton gradient. This Desulfovibrio desulfuricans (strain ATCC 27774 / DSM 6949 / MB) protein is NADH-quinone oxidoreductase subunit N.